The following is a 397-amino-acid chain: Na(+)/H(+) antiporter NhaA 1 (397 aa).

12 consecutive transmembrane segments (helical) span residues 15–35 (FQLE…ALII), 42–62 (YLYG…LNIA), 65–85 (LLLW…GLEV), 101–121 (ILPA…YWFI), 129–149 (VAGW…VLAL), 160–180 (LFLM…IALF), 183–203 (GTLS…LVAM), 219–241 (LILW…ALAF), 265–285 (WVAY…SLAG), 299–319 (ITIG…WVAV), 335–355 (ILGV…VGSL), and 370–390 (MGIL…TAMA).

Belongs to the NhaA Na(+)/H(+) (TC 2.A.33) antiporter family.

Its subcellular location is the cell inner membrane. The enzyme catalyses Na(+)(in) + 2 H(+)(out) = Na(+)(out) + 2 H(+)(in). Functionally, na(+)/H(+) antiporter that extrudes sodium in exchange for external protons. This Pseudomonas putida (strain ATCC 47054 / DSM 6125 / CFBP 8728 / NCIMB 11950 / KT2440) protein is Na(+)/H(+) antiporter NhaA 1.